The primary structure comprises 349 residues: sn-glycerol-3-phosphate import ATP-binding protein UgpC (349 aa).

The region spanning 4-235 (ITLKDVHKTY…PATAFVATFI (232 aa)) is the ABC transporter domain. Residue 37-44 (GPSGCGKS) coordinates ATP.

This sequence belongs to the ABC transporter superfamily. sn-glycerol-3-phosphate importer (TC 3.A.1.1.3) family. As to quaternary structure, the complex is composed of two ATP-binding proteins (UgpC), two transmembrane proteins (UgpA and UgpE) and a solute-binding protein (UgpB).

Its subcellular location is the cell inner membrane. The catalysed reaction is sn-glycerol 3-phosphate(out) + ATP + H2O = sn-glycerol 3-phosphate(in) + ADP + phosphate + H(+). Its function is as follows. Part of the ABC transporter complex UgpBAEC involved in sn-glycerol-3-phosphate (G3P) import. Responsible for energy coupling to the transport system. This Rhizobium meliloti (strain 1021) (Ensifer meliloti) protein is sn-glycerol-3-phosphate import ATP-binding protein UgpC.